A 653-amino-acid chain; its full sequence is tRNA 5-methylaminomethyl-2-thiouridine biosynthesis bifunctional protein MnmC (653 aa).

The tract at residues 1–236 is tRNA (mnm(5)s(2)U34)-methyltransferase; sequence MPDRLVPATL…KFAMLVGEYA (236 aa). The FAD-dependent cmnm(5)s(2)U34 oxidoreductase stretch occupies residues 260-653; sequence IGAGLAGCAL…IRALRGRKLG (394 aa).

It in the N-terminal section; belongs to the methyltransferase superfamily. tRNA (mnm(5)s(2)U34)-methyltransferase family. The protein in the C-terminal section; belongs to the DAO family. Requires FAD as cofactor.

The protein resides in the cytoplasm. The enzyme catalyses 5-aminomethyl-2-thiouridine(34) in tRNA + S-adenosyl-L-methionine = 5-methylaminomethyl-2-thiouridine(34) in tRNA + S-adenosyl-L-homocysteine + H(+). Functionally, catalyzes the last two steps in the biosynthesis of 5-methylaminomethyl-2-thiouridine (mnm(5)s(2)U) at the wobble position (U34) in tRNA. Catalyzes the FAD-dependent demodification of cmnm(5)s(2)U34 to nm(5)s(2)U34, followed by the transfer of a methyl group from S-adenosyl-L-methionine to nm(5)s(2)U34, to form mnm(5)s(2)U34. The chain is tRNA 5-methylaminomethyl-2-thiouridine biosynthesis bifunctional protein MnmC from Burkholderia vietnamiensis (strain G4 / LMG 22486) (Burkholderia cepacia (strain R1808)).